Here is a 346-residue protein sequence, read N- to C-terminus: Dihydroorotase (346 aa).

Positions 14 and 16 each coordinate Zn(2+). Substrate-binding positions include 16–18 (HLR) and asparagine 42. Zn(2+)-binding residues include lysine 100, histidine 137, and histidine 175. Lysine 100 bears the N6-carboxylysine mark. Histidine 137 contacts substrate. Leucine 220 serves as a coordination point for substrate. Residue aspartate 248 coordinates Zn(2+). Aspartate 248 is an active-site residue. Substrate contacts are provided by histidine 252 and alanine 264.

Belongs to the metallo-dependent hydrolases superfamily. DHOase family. Class II DHOase subfamily. In terms of assembly, homodimer. The cofactor is Zn(2+).

It carries out the reaction (S)-dihydroorotate + H2O = N-carbamoyl-L-aspartate + H(+). Its pathway is pyrimidine metabolism; UMP biosynthesis via de novo pathway; (S)-dihydroorotate from bicarbonate: step 3/3. Functionally, catalyzes the reversible cyclization of carbamoyl aspartate to dihydroorotate. In Ruegeria sp. (strain TM1040) (Silicibacter sp.), this protein is Dihydroorotase.